The sequence spans 710 residues: F-box only protein 40 (710 aa).

The TRAF-type zinc-finger motif lies at 53–114 (EHTLLCPLEQ…VDSETFLHEN (62 aa)). 2 disordered regions span residues 152-174 (DATE…GAVG) and 234-279 (GSLG…SQEL). A compositionally biased stretch (basic and acidic residues) spans 238–248 (KSEDKNGDVAG). Residues 572–626 (LNSLTSLPLEVLQYIAGFLDSISLSQLSQVSVLMRNICATLLQERGMVLSQWKKK) enclose the F-box domain.

As to quaternary structure, directly interacts with SKP1 and CUL1. As to expression, expressed only in heart and skeletal muscle.

The protein localises to the cytoplasm. Its function is as follows. Probable substrate-recognition component of the SCF (SKP1-CUL1-F-box protein)-type E3 ubiquitin ligase complex that may function in myogenesis. The sequence is that of F-box only protein 40 (Fbxo40) from Mus musculus (Mouse).